Reading from the N-terminus, the 119-residue chain is MGTDNKSKVEARASARYFKMSANKARRVINQIRGRSYEQALILLEFMPYRACYAILQLISSAAANANHNLGLSRANPFISEAKVDESTLFKRFQPRAQGRGYPIHKPTCHITITMIEKT.

Belongs to the universal ribosomal protein uL22 family. As to quaternary structure, part of the 50S ribosomal subunit.

It is found in the plastid. The protein resides in the chloroplast. Its function is as follows. This protein binds specifically to 23S rRNA. In terms of biological role, the globular domain of the protein is located near the polypeptide exit tunnel on the outside of the subunit, while an extended beta-hairpin is found that lines the wall of the exit tunnel in the center of the 70S ribosome. This Angiopteris evecta (Mule's foot fern) protein is Large ribosomal subunit protein uL22c (rpl22).